The following is a 609-amino-acid chain: UvrABC system protein C (609 aa).

Positions 15–92 (TGSGVYQMQD…IKQFRPRYNV (78 aa)) constitute a GIY-YIG domain. In terms of domain architecture, UVR spans 202 to 237 (DQVIIKLTERMEVASENLVFEEAAHYRDQIRQLRRL).

This sequence belongs to the UvrC family. Interacts with UvrB in an incision complex.

Its subcellular location is the cytoplasm. Its function is as follows. The UvrABC repair system catalyzes the recognition and processing of DNA lesions. UvrC both incises the 5' and 3' sides of the lesion. The N-terminal half is responsible for the 3' incision and the C-terminal half is responsible for the 5' incision. This chain is UvrABC system protein C, found in Coxiella burnetii (strain CbuG_Q212) (Coxiella burnetii (strain Q212)).